The chain runs to 368 residues: Alanine racemase (368 aa).

The Proton acceptor; specific for D-alanine role is filled by Lys-40. Lys-40 bears the N6-(pyridoxal phosphate)lysine mark. Arg-134 is a substrate binding site. Tyr-263 functions as the Proton acceptor; specific for L-alanine in the catalytic mechanism. Met-310 is a binding site for substrate.

The protein belongs to the alanine racemase family. The cofactor is pyridoxal 5'-phosphate.

It catalyses the reaction L-alanine = D-alanine. The protein operates within amino-acid biosynthesis; D-alanine biosynthesis; D-alanine from L-alanine: step 1/1. Its function is as follows. Catalyzes the interconversion of L-alanine and D-alanine. May also act on other amino acids. This Listeria monocytogenes serotype 1/2a (strain 10403S) protein is Alanine racemase (alr).